A 49-amino-acid chain; its full sequence is Large ribosomal subunit protein eL40 (49 aa).

It belongs to the eukaryotic ribosomal protein eL40 family.

The polypeptide is Large ribosomal subunit protein eL40 (Methanosarcina acetivorans (strain ATCC 35395 / DSM 2834 / JCM 12185 / C2A)).